A 138-amino-acid chain; its full sequence is MAPK kinase substrate protein At1g80180 (138 aa).

The tract at residues 52 to 138 (TSEVQDQTTK…RKRPAKRRSR (87 aa)) is disordered. Over residues 69 to 81 (KPIRTDGGMERSR) the composition is skewed to basic and acidic residues. Ser-98 carries the post-translational modification Phosphoserine. Ser-105 bears the Phosphoserine; by MAPK6 mark. Positions 121 to 138 (QPGKKVNQRKRPAKRRSR) are enriched in basic residues.

As to expression, expressed in developing cotyledons, mature cotyledons, cotyledon epidermis and stomata.

Functionally, may play a role in the regulation of stomata patterning. The protein is MAPK kinase substrate protein At1g80180 of Arabidopsis thaliana (Mouse-ear cress).